The sequence spans 258 residues: MRVWTVLLGAVLLLAACQADVQDVETKVKAKWEETVEVFREYVNRLSLATDDITEQITSSQMGKEMDMLIKDXVAELHAYRKDVEERLGPQAVVMRERLHTDVTVLGERLRVDMEEAKTRVQQYLGEARQVAGQNLEDVRSRVGTYLRKLRKRLAKDTEELRRKLEAYSKEATQHLETVREDLEPLREKGQQRLETLQQALRDQGQRLREQLEVRAQEMRGSLDRAATQLQEWLEPFLEDIRTQMQGLLDKLQXKEQQ.

Positions 1–19 (MRVWTVLLGAVLLLAACQA) are cleaved as a signal peptide. 3 consecutive repeat copies span residues 112 to 133 (VDMEEAKTRVQQYLGEARQVAG), 134 to 155 (QNLEDVRSRVGTYLRKLRKRLA), and 156 to 173 (KDTEELRRKLEAYSKEAT). The segment at 112-173 (VDMEEAKTRV…KLEAYSKEAT (62 aa)) is 3 X 22 AA approximate tandem repeats.

This sequence belongs to the apolipoprotein A1/A4/E family. As to quaternary structure, homotetramer.

It is found in the secreted. The protein resides in the extracellular space. Its subcellular location is the extracellular matrix. Functionally, APOE is an apolipoprotein, a protein associating with lipid particles, that mainly functions in lipoprotein-mediated lipid transport between organs via the plasma and interstitial fluids. APOE is a core component of plasma lipoproteins and is involved in their production, conversion and clearance. Apolipoproteins are amphipathic molecules that interact both with lipids of the lipoprotein particle core and the aqueous environment of the plasma. In Alligator mississippiensis (American alligator), this protein is Apolipoprotein E (APOE).